The sequence spans 447 residues: N-succinylarginine dihydrolase (447 aa).

Residues 19–28 (AGLSFGNEAS), N110, and 137–138 (HR) each bind substrate. Residue E174 is part of the active site. R212 is a binding site for substrate. H248 is a catalytic residue. D250 and N359 together coordinate substrate. C365 acts as the Nucleophile in catalysis.

Belongs to the succinylarginine dihydrolase family. Homodimer.

The catalysed reaction is N(2)-succinyl-L-arginine + 2 H2O + 2 H(+) = N(2)-succinyl-L-ornithine + 2 NH4(+) + CO2. Its pathway is amino-acid degradation; L-arginine degradation via AST pathway; L-glutamate and succinate from L-arginine: step 2/5. Catalyzes the hydrolysis of N(2)-succinylarginine into N(2)-succinylornithine, ammonia and CO(2). This chain is N-succinylarginine dihydrolase, found in Escherichia coli O6:K15:H31 (strain 536 / UPEC).